A 215-amino-acid chain; its full sequence is MKTVLLTGFDPFGGENINPAWEVAKGLHEKTIGEYKIISKQVPTVFHKSISVLKEYIEELAPEIIICIGQAGGRPDITIERVAINIDDARIADNEGNQPVDVPVVEEGVIAYWSTLPMKAIVKKLREEGIPSSVSQTAGTFVCNHLFYGLMHELEKHDKKIKGGFIHIPFLPEQASNYPGQPSMSLSTIRKGIELAIEVTTTVKVDIVEVGGATH.

Catalysis depends on residues Glu-80, Cys-143, and His-167.

The protein belongs to the peptidase C15 family. In terms of assembly, homotetramer.

The protein localises to the cytoplasm. It carries out the reaction Release of an N-terminal pyroglutamyl group from a polypeptide, the second amino acid generally not being Pro.. Functionally, removes 5-oxoproline from various penultimate amino acid residues except L-proline. The polypeptide is Pyrrolidone-carboxylate peptidase (Bacillus cereus (strain ATCC 14579 / DSM 31 / CCUG 7414 / JCM 2152 / NBRC 15305 / NCIMB 9373 / NCTC 2599 / NRRL B-3711)).